The primary structure comprises 135 residues: Transcriptional regulator HosA (135 aa).

One can recognise an HTH marR-type domain in the interval 4–134; that stretch reads RNKAFHQLRQ…FMQLVRKMMN (131 aa). The segment at residues 48–71 is a DNA-binding region (H-T-H motif); sequence QVALIEAAVSTKATLAEMLARMEN.

Its function is as follows. Involved in the temperature-dependent positive control of flagellum-driven swimming motility and cellular aggregation. Regulates fliC expression by directly interacting with fliC promoter. This is Transcriptional regulator HosA (hosA) from Escherichia coli O127:H6 (strain E2348/69 / EPEC).